The sequence spans 2242 residues: Multifunctional protein CAD (2242 aa).

A GATase (Glutamine amidotransferase) region spans residues 1–365; that stretch reads MATLFLDDGS…CARDVKLGVN (365 aa). L-glutamine is bound by residues Ser-44, Gly-222, and Gly-224. The region spanning 177–363 is the Glutamine amidotransferase type-1 domain; that stretch reads KIMAVDCGMK…LECARDVKLG (187 aa). Cys-252 serves as the catalytic Nucleophile; for GATase activity. Positions 253, 256, 294, 296, and 297 each coordinate L-glutamine. Active-site for GATase activity residues include His-336 and Glu-338. The tract at residues 366–397 is linker; that stretch reads LDKTVKGRVISHYSFKNGTENSKTPPGRIQPH. Positions 398 to 937 are CPSase A; that stretch reads KVLILGSGGL…GEGHDLDFTK (540 aa). The tract at residues 398-1462 is CPSase (Carbamoyl-phosphate synthase); sequence KVLILGSGGL…TPPVKTHIDS (1065 aa). ATP contacts are provided by Arg-518, Arg-558, Gly-564, Gly-565, Lys-595, Glu-602, Gly-628, Ile-629, His-630, Gln-671, and Glu-685. 2 consecutive ATP-grasp domains span residues 522-714 and 1057-1248; these read VEKM…KLAL and SRML…KVIM. Residues Gln-671, Glu-685, and Asn-687 each coordinate Mg(2+). Mn(2+) is bound by residues Gln-671, Glu-685, and Asn-687. Positions 938–1462 are CPSase B; the sequence is PHVMVIGSGV…TPPVKTHIDS (525 aa). Residues Arg-1093, Lys-1132, Ile-1134, Glu-1139, Gly-1164, Val-1165, His-1166, Ser-1167, Gln-1207, and Glu-1219 each contribute to the ATP site. Mg(2+)-binding residues include Gln-1207, Glu-1219, and Asn-1221. Positions 1207, 1219, and 1221 each coordinate Mn(2+). One can recognise an MGS-like domain in the interval 1313–1469; sequence FKIPKKNILL…IDSMSSHKLI (157 aa). A DHOase (dihydroorotase) region spans residues 1463–1796; that stretch reads MSSHKLIRLP…KGRVRRVVLR (334 aa). Positions 1478 and 1480 each coordinate Zn(2+). 2 residues coordinate (S)-dihydroorotate: Arg-1482 and Asn-1512. Residues Lys-1563, His-1597, Cys-1620, His-1621, and Glu-1644 each contribute to the Zn(2+) site. An N6-carboxylysine modification is found at Lys-1563. Arg-1668 provides a ligand contact to (S)-dihydroorotate. Zn(2+) is bound at residue Asp-1693. Asp-1693 functions as the For DHOase activity in the catalytic mechanism. 2 residues coordinate (S)-dihydroorotate: His-1697 and Pro-1709. A linker region spans residues 1797–1934; sequence GEVAYIDGQV…QAVPHPYSLL (138 aa). The tract at residues 1829-1862 is disordered; it reads PTTVKTPEHSKPTQTETVRTRTASPRRLASSGPA. Over residues 1840 to 1851 the composition is skewed to polar residues; that stretch reads PTQTETVRTRTA. The segment at 1935–2242 is ATCase (Aspartate transcarbamylase); sequence LHPFVGQHIL…ALLATVLGKF (308 aa). 2 residues coordinate carbamoyl phosphate: Arg-1992 and Thr-1993. Lys-2020 provides a ligand contact to L-aspartate. Arg-2041, His-2069, and Gln-2072 together coordinate carbamoyl phosphate. The L-aspartate site is built by Arg-2102 and Arg-2163. Residues Leu-2202 and Pro-2203 each coordinate carbamoyl phosphate.

In the N-terminal section; belongs to the CarA family. The protein in the 2nd section; belongs to the CarB family. It in the 3rd section; belongs to the metallo-dependent hydrolases superfamily. DHOase family. CAD subfamily. This sequence in the C-terminal section; belongs to the aspartate/ornithine carbamoyltransferase superfamily. ATCase family. Homohexamer. The cofactor is Mg(2+). Mn(2+) serves as cofactor. Zn(2+) is required as a cofactor. In terms of tissue distribution, present in the testis but not in the liver.

The protein localises to the cytoplasm. The protein resides in the nucleus. It carries out the reaction hydrogencarbonate + L-glutamine + 2 ATP + H2O = carbamoyl phosphate + L-glutamate + 2 ADP + phosphate + 2 H(+). The catalysed reaction is L-glutamine + H2O = L-glutamate + NH4(+). The enzyme catalyses hydrogencarbonate + NH4(+) + 2 ATP = carbamoyl phosphate + 2 ADP + phosphate + 2 H(+). It catalyses the reaction carbamoyl phosphate + L-aspartate = N-carbamoyl-L-aspartate + phosphate + H(+). It carries out the reaction (S)-dihydroorotate + H2O = N-carbamoyl-L-aspartate + H(+). Its pathway is pyrimidine metabolism; UMP biosynthesis via de novo pathway; (S)-dihydroorotate from bicarbonate: step 1/3. The protein operates within pyrimidine metabolism; UMP biosynthesis via de novo pathway; (S)-dihydroorotate from bicarbonate: step 2/3. It participates in pyrimidine metabolism; UMP biosynthesis via de novo pathway; (S)-dihydroorotate from bicarbonate: step 3/3. With respect to regulation, allosterically regulated and controlled by phosphorylation. 5-phosphoribose 1-diphosphate is an activator while UMP is an inhibitor of the CPSase reaction. Multifunctional protein that encodes the first 3 enzymatic activities of the de novo pyrimidine pathway: carbamoylphosphate synthetase (CPSase; EC 6.3.5.5), aspartate transcarbamylase (ATCase; EC 2.1.3.2) and dihydroorotase (DHOase; EC 3.5.2.3). The CPSase-function is accomplished in 2 steps, by a glutamine-dependent amidotransferase activity (GATase) that binds and cleaves glutamine to produce ammonia, followed by an ammonium-dependent carbamoyl phosphate synthetase, which reacts with the ammonia, hydrogencarbonate and ATP to form carbamoyl phosphate. The endogenously produced carbamoyl phosphate is sequestered and channeled to the ATCase active site. ATCase then catalyzes the formation of carbamoyl-L-aspartate from L-aspartate and carbamoyl phosphate. In the last step, DHOase catalyzes the cyclization of carbamoyl aspartate to dihydroorotate. In Squalus acanthias (Spiny dogfish), this protein is Multifunctional protein CAD (CAD).